Consider the following 164-residue polypeptide: UPF0225 protein Shewmr4_2054 (164 aa).

Belongs to the UPF0225 family.

This chain is UPF0225 protein Shewmr4_2054, found in Shewanella sp. (strain MR-4).